The following is a 539-amino-acid chain: Probable malate:quinone oxidoreductase 3 (539 aa).

Positions 516 to 539 (LEPPVSPQRPESIRPADSQGVASR) are disordered.

It belongs to the MQO family. The cofactor is FAD.

The enzyme catalyses (S)-malate + a quinone = a quinol + oxaloacetate. It participates in carbohydrate metabolism; tricarboxylic acid cycle; oxaloacetate from (S)-malate (quinone route): step 1/1. In Pseudomonas putida (strain ATCC 47054 / DSM 6125 / CFBP 8728 / NCIMB 11950 / KT2440), this protein is Probable malate:quinone oxidoreductase 3.